Here is a 313-residue protein sequence, read N- to C-terminus: tRNA dimethylallyltransferase (313 aa).

ATP is bound at residue 11-18 (GPTAGGKT). Residue 13-18 (TAGGKT) coordinates substrate. Interaction with substrate tRNA regions lie at residues 36–39 (DSAL), 160–164 (QRIGR), and 243–248 (RCVGYR).

The protein belongs to the IPP transferase family. Monomer. It depends on Mg(2+) as a cofactor.

It carries out the reaction adenosine(37) in tRNA + dimethylallyl diphosphate = N(6)-dimethylallyladenosine(37) in tRNA + diphosphate. Catalyzes the transfer of a dimethylallyl group onto the adenine at position 37 in tRNAs that read codons beginning with uridine, leading to the formation of N6-(dimethylallyl)adenosine (i(6)A). The protein is tRNA dimethylallyltransferase of Neisseria meningitidis serogroup A / serotype 4A (strain DSM 15465 / Z2491).